A 308-amino-acid chain; its full sequence is uncharacterized protein (308 aa).

Polar residues-rich tracts occupy residues Trp-138–Pro-148 and Ser-205–Ser-229. Disordered regions lie at residues Trp-138–Asn-157 and Ser-205–Ser-235.

It localises to the cytoplasm. This is an uncharacterized protein from Schizosaccharomyces pombe (strain 972 / ATCC 24843) (Fission yeast).